The following is a 179-amino-acid chain: Large ribosomal subunit protein uL6 (179 aa).

Residues 154-169 (EPYKGKGVKYEHEQIR) show a composition bias toward basic and acidic residues. The interval 154 to 179 (EPYKGKGVKYEHEQIRRKAGKSGGKK) is disordered. The segment covering 170–179 (RKAGKSGGKK) has biased composition (basic residues).

Belongs to the universal ribosomal protein uL6 family. As to quaternary structure, part of the 50S ribosomal subunit.

Functionally, this protein binds to the 23S rRNA, and is important in its secondary structure. It is located near the subunit interface in the base of the L7/L12 stalk, and near the tRNA binding site of the peptidyltransferase center. The protein is Large ribosomal subunit protein uL6 of Oleidesulfovibrio alaskensis (strain ATCC BAA-1058 / DSM 17464 / G20) (Desulfovibrio alaskensis).